The following is a 307-amino-acid chain: Probable protein S-acyltransferase 14 (307 aa).

The next 2 membrane-spanning stretches (helical) occupy residues 22–42 and 63–83; these read LGSI…YAVV and ILIL…SVVF. Residues 127-177 form the DHHC domain; the sequence is RFCRKCNQLKPSRCHHCSVCGRCVLKMDHHCVWVVNCVGALNYKYFLLFLF. Residue Cys-157 is the S-palmitoyl cysteine intermediate of the active site. Helical transmembrane passes span 171–191 and 213–233; these read YFLL…LVLM and TFLA…FLIM.

The protein belongs to the DHHC palmitoyltransferase family.

It is found in the golgi apparatus. Its subcellular location is the trans-Golgi network membrane. The catalysed reaction is L-cysteinyl-[protein] + hexadecanoyl-CoA = S-hexadecanoyl-L-cysteinyl-[protein] + CoA. Palmitoyl acyltransferase. The chain is Probable protein S-acyltransferase 14 (PAT14) from Arabidopsis thaliana (Mouse-ear cress).